Reading from the N-terminus, the 76-residue chain is DNA gyrase inhibitor YacG (76 aa).

Zn(2+)-binding residues include C20, C23, C39, and C43. A disordered region spans residues 54-76 (EEKSIPGAPDLSDSDGWSDDMGY). The segment covering 65–76 (SDSDGWSDDMGY) has biased composition (acidic residues).

Belongs to the DNA gyrase inhibitor YacG family. As to quaternary structure, interacts with GyrB. Requires Zn(2+) as cofactor.

In terms of biological role, inhibits all the catalytic activities of DNA gyrase by preventing its interaction with DNA. Acts by binding directly to the C-terminal domain of GyrB, which probably disrupts DNA binding by the gyrase. The chain is DNA gyrase inhibitor YacG from Photobacterium profundum (strain SS9).